We begin with the raw amino-acid sequence, 125 residues long: Snaclec B6 (125 aa).

3 disulfides stabilise this stretch: Cys-2-Cys-13, Cys-30-Cys-119, and Cys-96-Cys-111. Residues 9–120 (HEGHCYKVFK…CNISQYFVCQ (112 aa)) form the C-type lectin domain. Asn-95 is a glycosylation site (N-linked (GlcNAc...) asparagine). N-linked (GlcNAc...) asparagine glycosylation is present at Asn-112.

It belongs to the snaclec family. As to quaternary structure, heterodimer; disulfide-linked. Expressed by the venom gland.

It localises to the secreted. Its function is as follows. Interferes with one step of hemostasis (modulation of platelet aggregation, or coagulation cascade, for example). This Macrovipera lebetinus (Levantine viper) protein is Snaclec B6.